Here is a 256-residue protein sequence, read N- to C-terminus: Small ribosomal subunit protein eS1 (256 aa).

Basic residues predominate over residues 1–18 (MAVGKNKRLSKGKKGVKK). The interval 1-20 (MAVGKNKRLSKGKKGVKKRT) is disordered. Ala-2 carries the N-acetylalanine; partial modification.

Belongs to the eukaryotic ribosomal protein eS1 family. As to quaternary structure, component of the small ribosomal subunit. Mature ribosomes consist of a small (40S) and a large (60S) subunit. The 40S subunit contains about 33 different proteins and 1 molecule of RNA (18S). The 60S subunit contains about 49 different proteins and 3 molecules of RNA (25S, 5.8S and 5S).

It is found in the cytoplasm. In Aspergillus clavatus (strain ATCC 1007 / CBS 513.65 / DSM 816 / NCTC 3887 / NRRL 1 / QM 1276 / 107), this protein is Small ribosomal subunit protein eS1 (rps1).